A 285-amino-acid chain; its full sequence is Probable endonuclease 4 (285 aa).

Zn(2+) contacts are provided by histidine 69, histidine 109, glutamate 145, aspartate 179, histidine 182, histidine 216, aspartate 229, histidine 231, and glutamate 261.

The protein belongs to the AP endonuclease 2 family. Zn(2+) is required as a cofactor.

The catalysed reaction is Endonucleolytic cleavage to 5'-phosphooligonucleotide end-products.. In terms of biological role, endonuclease IV plays a role in DNA repair. It cleaves phosphodiester bonds at apurinic or apyrimidinic (AP) sites, generating a 3'-hydroxyl group and a 5'-terminal sugar phosphate. In Escherichia fergusonii (strain ATCC 35469 / DSM 13698 / CCUG 18766 / IAM 14443 / JCM 21226 / LMG 7866 / NBRC 102419 / NCTC 12128 / CDC 0568-73), this protein is Probable endonuclease 4.